The primary structure comprises 3515 residues: Microtubule-actin cross-linking factor 1, isoforms 6/7 (3515 aa).

7 disordered regions span residues 1–23 (MGKP…KGEE), 108–136 (VQKS…WKSF), 155–196 (VSEA…TLEH), 965–1178 (TEED…AVPT), 1217–1298 (SPAA…SPAA), 1710–1730 (EELA…QFQQ), and 3078–3108 (PTHA…ILSQ). The span at 120-129 (PNAERKDNVN) shows a compositional bias: basic and acidic residues. Residues 157–245 (EAGASNPSLQ…ESEAVATSGN (89 aa)) form a 13 X 13 AA approximate tandem repeat of P-T-S-P-A-A-A-V-P-T-P-E-E region. Low complexity-rich tracts occupy residues 995–1031 (STPE…SPAA) and 1040–1139 (TSPA…AVPT). A run of 13 repeats spans residues 1012–1024 (EPTS…PTPE), 1026–1037 (PTSPAAAVPPPE), 1038–1051 (EPTS…TPEE), 1052–1064 (PTSP…TPEE), 1065–1077 (PTSP…TPEE), 1078–1090 (PTSP…TPEE), 1091–1103 (PTSP…TPEE), 1104–1116 (PTSP…TPEE), 1117–1129 (PASP…TPEE), 1130–1142 (PASP…TPEE), 1143–1155 (PAFP…TPEE), 1156–1168 (SASA…TPEE), and 1169–1178 (SASPAAAVPT). Residues 1140–1151 (PEEPAFPAPAVP) show a composition bias toward pro residues. Composition is skewed to low complexity over residues 1162-1178 (AVPT…AVPT) and 1268-1298 (SSPA…SPAA). Positions 1715–1730 (SGGQSPTGEQIPQFQQ) are enriched in polar residues. EF-hand domains follow at residues 3168 to 3203 (HKKS…SKFP) and 3204 to 3239 (TTKL…NKDA). Residues aspartate 3181, aspartate 3183, aspartate 3185, lysine 3187, glutamate 3192, aspartate 3217, aspartate 3219, aspartate 3221, tyrosine 3223, and glutamate 3228 each contribute to the Ca(2+) site. In terms of domain architecture, GAR spans 3244-3316 (TDADKIEDEV…EFLVKNDPCR (73 aa)). The interval 3332-3515 (PEGASQGMTP…ASPRTPGPKR (184 aa)) is disordered. A compositionally biased stretch (low complexity) spans 3352–3386 (SSRAASPTRSSSSASQSNHSCTSMPSSPATPASGT). The segment covering 3402–3426 (TFHSSRTSLAGDTSNSSSPASTGAK) has biased composition (polar residues). The segment covering 3437 to 3451 (SRPGSRAGSRAGSRA) has biased composition (low complexity). The span at 3466-3488 (ETQSACSDTSESSAAGGQGNSRR) shows a compositional bias: polar residues.

It localises to the cytoplasm. Its subcellular location is the cytoskeleton. The polypeptide is Microtubule-actin cross-linking factor 1, isoforms 6/7 (Homo sapiens (Human)).